We begin with the raw amino-acid sequence, 101 residues long: MVKRLTDEDRHAALRELPGWSAAEGREAIARTFVFKDFNEAFGFMARVALIAEKHDHHPEWRNVYKTVEVVLTTHDAGGVTARDIDLARAMNAIAAQLSPR.

It belongs to the pterin-4-alpha-carbinolamine dehydratase family.

The enzyme catalyses (4aS,6R)-4a-hydroxy-L-erythro-5,6,7,8-tetrahydrobiopterin = (6R)-L-erythro-6,7-dihydrobiopterin + H2O. This chain is Putative pterin-4-alpha-carbinolamine dehydratase, found in Rhodopseudomonas palustris (strain BisB18).